We begin with the raw amino-acid sequence, 642 residues long: Dihydrolipoyllysine-residue acetyltransferase component of pyruvate dehydrogenase complex, mitochondrial (642 aa).

The N-terminal 85 residues, 1–85, are a transit peptide targeting the mitochondrion; it reads MWRVCARRAR…LLGSPSRRSY (85 aa). A disordered region spans residues 80 to 99; sequence PSRRSYSLPPHQKVPLPSLS. Lipoyl-binding domains lie at 90-166 and 217-293; these read HQKV…CITV and HMQI…CIIV. Ser99 is modified (phosphoserine). An N6-lipoyllysine mark is found at Lys131 and Lys258. A disordered region spans residues 313-346; the sequence is LKPQAAPPAPPPVAAVPPTPQPVAPTPSAAPAGP. Positions 317 to 337 are enriched in pro residues; the sequence is AAPPAPPPVAAVPPTPQPVAP. A Peripheral subunit-binding (PSBD) domain is found at 351–388; that stretch reads FVSPLAKKLAAEKGIDLTQVKGTGPEGRIIKKDIDSFV. Residue Arg456 participates in CoA binding. Lys461 is modified (N6-acetyllysine). Lys468 is subject to N6-succinyllysine. Ser470 is a CoA binding site. Lys542 is subject to N6-succinyllysine. Ser561, Asn562, and Gly586 together coordinate CoA. Residues His615 and Asp619 contribute to the active site.

This sequence belongs to the 2-oxoacid dehydrogenase family. As to quaternary structure, part of the pyruvate dehydrogenase complex (PDHc) that is a multi-enzyme complex composed of multiple copies of three enzymes, pyruvate dehydrogenase (subunits PDH1A and PDHB, E1 component), dihydrolipoamide acetyltransferase (DLAT, E2 component), and dihydrolipoamide dehydrogenase (DLD, E3 component) to which is added an additional protein the E3-binding protein (PDHX, E3BP). In terms of structural architecture, the E2 and E3BP components assemble into a 60meric central core with icosahedral symmetry. The central core is decorated with E1 and E3 proteins. Currently, two alternative models for the E2:E3BP stoichiometry are considered as being either 48:12 (E2(48)-E3BP(12)) or 40:20 (E2(40)-E3BP(20)). Interacts with PDK2 and PDK3. Interacts with SIRT4. Interacts with PDHB. (R)-lipoate serves as cofactor. In terms of processing, delipoylated at Lys-131 and Lys-258 by SIRT4, delipoylation decreases the PHD complex activity.

The protein resides in the mitochondrion matrix. The enzyme catalyses N(6)-[(R)-dihydrolipoyl]-L-lysyl-[protein] + acetyl-CoA = N(6)-[(R)-S(8)-acetyldihydrolipoyl]-L-lysyl-[protein] + CoA. As part of the pyruvate dehydrogenase complex, catalyzes the transfers of an acetyl group to a lipoic acid moiety. The pyruvate dehydrogenase complex, catalyzes the overall conversion of pyruvate to acetyl-CoA and CO(2), and thereby links cytoplasmic glycolysis and the mitochondrial tricarboxylic acid (TCA) cycle. In Mus musculus (Mouse), this protein is Dihydrolipoyllysine-residue acetyltransferase component of pyruvate dehydrogenase complex, mitochondrial.